Reading from the N-terminus, the 97-residue chain is uncharacterized protein (97 aa).

This is an uncharacterized protein from Methanocaldococcus jannaschii (strain ATCC 43067 / DSM 2661 / JAL-1 / JCM 10045 / NBRC 100440) (Methanococcus jannaschii).